A 314-amino-acid polypeptide reads, in one-letter code: Small ribosomal subunit protein RACK1 (314 aa).

Thr10 is modified (phosphothreonine). One copy of the WD 1 repeat lies at 13–44; that stretch reads GHSGWVTSLSTAPENPDILLSGSRDKSIILWN. A Phosphoserine modification is found at Ser39. At Tyr52 the chain carries Phosphotyrosine. WD repeat units follow at residues 61-91, 103-133, 146-178, 190-220, 231-260, and 281-311; these read GHSH…RLWD, GHTS…KIWN, GHSD…KVWD, GHTG…MLWD, EAKA…RIFD, and SSEP…RVWQ. The residue at position 148 (Ser148) is a Phosphoserine. Ser242 and Ser255 each carry phosphoserine.

The protein belongs to the WD repeat G protein beta family. Ribosomal protein RACK1 subfamily. In terms of assembly, component of the small ribosomal subunit (SSU). Mature yeast ribosomes consist of a small (40S) and a large (60S) subunit. The 40S small subunit contains 1 molecule of ribosomal RNA (18S rRNA) and at least 33 different proteins. The large 60S subunit contains 3 rRNA molecules (25S, 5.8S and 5S rRNA) and at least 46 different proteins. RACK1 is located at the head of the SSU in the vicinity of the mRNA exit channel. RACK1 interacts with the mRNA-binding protein SCP16. RACK1 also exists simultaneously as a homodimer in a cytosolic non-ribosome-bound form. Interacts with pck2. Interacts with pat1/ran1.

Its subcellular location is the cytoplasm. It localises to the membrane. Functionally, component of the ribosome, a large ribonucleoprotein complex responsible for the synthesis of proteins in the cell. The small ribosomal subunit (SSU) binds messenger RNAs (mRNAs) and translates the encoded message by selecting cognate aminoacyl-transfer RNA (tRNA) molecules. The large subunit (LSU) contains the ribosomal catalytic site termed the peptidyl transferase center (PTC), which catalyzes the formation of peptide bonds, thereby polymerizing the amino acids delivered by tRNAs into a polypeptide chain. The nascent polypeptides leave the ribosome through a tunnel in the LSU and interact with protein factors that function in enzymatic processing, targeting, and the membrane insertion of nascent chains at the exit of the ribosomal tunnel. Located at the head of the 40S ribosomal subunit in the vicinity of the mRNA exit channel, RACK1 serves as a scaffold protein that can recruit other proteins to the ribosome. Involved in induction of the ribosome quality control (RQC) pathway; a pathway that degrades nascent peptide chains during problematic translation. Involved in the negative regulation of translation of a specific subset of proteins. May be a receptor for protein kinase C in the regulation of actin cytoskeleton organization during cell wall synthesis and morphogenesis. Involved in the control of G2/M transition. May function as an anchoring protein for pat1/ran1 kinase. Negatively regulates the cell integrity transduction pathway by favoring translation of the tyrosine-phosphatases pyp1 and pyp2 that deactivate pmk1. Positively regulates the synthesis of the stress-responsive transcription factor Atf1 and the cytoplasmic catalase, a detoxificant enzyme induced by treatment with hydrogen peroxide. This is Small ribosomal subunit protein RACK1 from Schizosaccharomyces pombe (strain 972 / ATCC 24843) (Fission yeast).